The sequence spans 115 residues: Phosphoribosyl-AMP cyclohydrolase (115 aa).

Asp-80 serves as a coordination point for Mg(2+). Cys-81 contacts Zn(2+). Mg(2+) is bound by residues Asp-82 and Asp-84. Cys-97 and Cys-104 together coordinate Zn(2+).

This sequence belongs to the PRA-CH family. Homodimer. It depends on Mg(2+) as a cofactor. The cofactor is Zn(2+).

The protein resides in the cytoplasm. It carries out the reaction 1-(5-phospho-beta-D-ribosyl)-5'-AMP + H2O = 1-(5-phospho-beta-D-ribosyl)-5-[(5-phospho-beta-D-ribosylamino)methylideneamino]imidazole-4-carboxamide. It functions in the pathway amino-acid biosynthesis; L-histidine biosynthesis; L-histidine from 5-phospho-alpha-D-ribose 1-diphosphate: step 3/9. In terms of biological role, catalyzes the hydrolysis of the adenine ring of phosphoribosyl-AMP. The protein is Phosphoribosyl-AMP cyclohydrolase of Mycobacterium bovis (strain ATCC BAA-935 / AF2122/97).